Reading from the N-terminus, the 1098-residue chain is Contactin-5 (1098 aa).

Residues 1 to 23 (MASCWRLILFLSVTRWLSDYSEA) form the signal peptide. Ig-like C2-type domains follow at residues 98–189 (PVFV…ATLQ), 195–281 (NFSG…RVLS), 299–384 (PKIE…GQLQ), 389–473 (PHWV…AELK), 479–568 (PSFE…LSVK), and 570–659 (PTRI…DSVS). The cysteines at positions 122 and 172 are disulfide-linked. N-linked (GlcNAc...) asparagine glycosylation is found at N137 and N195. 2 disulfides stabilise this stretch: C216-C268 and C321-C368. Residues N396, N448, and N539 are each glycosylated (N-linked (GlcNAc...) asparagine). Disulfide bonds link C410–C457, C502–C550, and C592–C649. Fibronectin type-III domains lie at 672-770 (PPGV…TNEA), 775-872 (APSN…SAEG), 877-971 (APTD…TKRH), and 976-1066 (PPGN…SYSG). 3 N-linked (GlcNAc...) asparagine glycosylation sites follow: N778, N815, and N930. A disordered region spans residues 956–982 (GYGPPSREASTTTKRHPPREPPGNLRW). N-linked (GlcNAc...) asparagine glycosylation occurs at N1001. S1071 carries the GPI-anchor amidated serine lipid modification. The propeptide at 1072-1098 (AQSTLHSLSKWSSVTLLLALMLPSSSW) is removed in mature form.

This sequence belongs to the immunoglobulin superfamily. Contactin family. Interacts with PTPRG. In terms of tissue distribution, expressed in the nervous system. Preferentially expressed in the central auditory pathways.

The protein resides in the cell membrane. Functionally, contactins mediate cell surface interactions during nervous system development. Has some neurite outgrowth-promoting activity in the cerebral cortical neurons but not in hippocampal neurons. Involved in neuronal activity in the auditory system. This is Contactin-5 (Cntn5) from Mus musculus (Mouse).